A 945-amino-acid polypeptide reads, in one-letter code: Isoleucine--tRNA ligase (945 aa).

The 'HIGH' region signature appears at 66 to 76; it reads PYANGDIHLGH. E581 serves as a coordination point for L-isoleucyl-5'-AMP. Residues 622–626 carry the 'KMSKS' region motif; the sequence is KMSKS. ATP is bound at residue K625. Residues C908, C911, C928, and C931 each coordinate Zn(2+).

Belongs to the class-I aminoacyl-tRNA synthetase family. IleS type 1 subfamily. In terms of assembly, monomer. Zn(2+) serves as cofactor.

It localises to the cytoplasm. It catalyses the reaction tRNA(Ile) + L-isoleucine + ATP = L-isoleucyl-tRNA(Ile) + AMP + diphosphate. Its function is as follows. Catalyzes the attachment of isoleucine to tRNA(Ile). As IleRS can inadvertently accommodate and process structurally similar amino acids such as valine, to avoid such errors it has two additional distinct tRNA(Ile)-dependent editing activities. One activity is designated as 'pretransfer' editing and involves the hydrolysis of activated Val-AMP. The other activity is designated 'posttransfer' editing and involves deacylation of mischarged Val-tRNA(Ile). The chain is Isoleucine--tRNA ligase from Paraburkholderia phytofirmans (strain DSM 17436 / LMG 22146 / PsJN) (Burkholderia phytofirmans).